We begin with the raw amino-acid sequence, 237 residues long: Carboxy-S-adenosyl-L-methionine synthase (237 aa).

S-adenosyl-L-methionine-binding positions include Y36, 61-63 (GAS), 86-87 (DN), 112-113 (DI), N127, and R194.

Belongs to the class I-like SAM-binding methyltransferase superfamily. Cx-SAM synthase family. As to quaternary structure, homodimer.

It catalyses the reaction prephenate + S-adenosyl-L-methionine = carboxy-S-adenosyl-L-methionine + 3-phenylpyruvate + H2O. In terms of biological role, catalyzes the conversion of S-adenosyl-L-methionine (SAM) to carboxy-S-adenosyl-L-methionine (Cx-SAM). This Ruthia magnifica subsp. Calyptogena magnifica protein is Carboxy-S-adenosyl-L-methionine synthase.